An 899-amino-acid polypeptide reads, in one-letter code: Solute carrier family 12 member 9 (899 aa).

The Cytoplasmic segment spans residues 1–42 (MANEHSPLLVHGVYSMMGNAEDSRGGSAGTGEASNPKTDPRK). Residues 43–63 (LNTFFGVMVPTILSMFSIVLF) traverse the membrane as a helical segment. Over 64–78 (LRTGFVVGHAGLLHG) the chain is Extracellular. Residues 79 to 99 (LLMLFVAYFIISLTILSICAI) form a helical membrane-spanning segment. The Cytoplasmic segment spans residues 100 to 125 (STNGAVEGGGAYFMISRSLGPEFGGS). The helical transmembrane segment at 126 to 146 (IGLMFYLAKVCACGVYVLGLV) threads the bilayer. Residues 147 to 175 (EAIMDVFGQDPGSSVAQGLRVLPQGYWYT) are Extracellular-facing. Residues 176-196 (VLYSSVVLLLCMLVCLVGAHI) traverse the membrane as a helical segment. Residues 197 to 201 (YAKAS) lie on the Cytoplasmic side of the membrane. The helical transmembrane segment at 202–222 (FLILLVVTVSLISIIISPLIV) threads the bilayer. Residues 223–269 (SPQGFNITHTYGNNHSVTVSPSYTGFNSTTLKNNLGPRYSLDYSTNT) are Extracellular-facing. N-linked (GlcNAc...) asparagine glycosylation is found at asparagine 228, asparagine 236, and asparagine 249. The chain crosses the membrane as a helical span at residues 270-290 (MMSFATVFAVMFTSCTGIMAG). Over 291 to 306 (ANMSGELKNPSESIPK) the chain is Cytoplasmic. A helical transmembrane segment spans residues 307–327 (GTIMAVAYTFTVYVLLYLLLS). The Extracellular segment spans residues 328–350 (STCDRSLLLNDYAVFQRVNVWPP). Residues 351–371 (FVTIGVYCASLSAAMCSMIGA) form a helical membrane-spanning segment. Residues 372–373 (SR) are Cytoplasmic-facing. Residues 374 to 394 (ILHALALDQLFGLPLAPAAVT) form a helical membrane-spanning segment. The Extracellular portion of the chain corresponds to 395-399 (SSSGN). Residues 400-420 (PWVSVLYTWALVQCTLFAGQL) traverse the membrane as a helical segment. A topological domain (cytoplasmic) is located at residue asparagine 421. A helical transmembrane segment spans residues 422-442 (VIAGIVTVFYLLAYAAVDLAC). Residues 443–455 (LALEWASAPNFRP) are Extracellular-facing. A helical transmembrane segment spans residues 456–476 (TFQFFSWHTCLLGIISCVVMM). Over 477 to 487 (FVINPVYSSAS) the chain is Extracellular. The chain crosses the membrane as a helical span at residues 488 to 510 (IVLLLLLLLFLHYRSPTSSWGYI). Over 511 to 563 (SQALIFHQVRKYLLMLDSRKDHVKFWRPQVLLMVSNPRSSCQLICFVNQLKKG) the chain is Cytoplasmic. The helical transmembrane segment at 564 to 584 (GLFVLGHVQIGDLDVLPADPV) threads the bilayer. Residues 585 to 749 (QPQYNFWLSL…NLLTPGSASY (165 aa)) are Extracellular-facing. The helical transmembrane segment at 750 to 770 (ADVGSLFLLQMACVLNMASGW) threads the bilayer. Over 771–899 (RRARLRIFVC…GVTPVTCTEL (129 aa)) the chain is Cytoplasmic.

It belongs to the SLC12A transporter family.

It localises to the cell membrane. The protein resides in the lysosome membrane. Seems to correspond to a subunit of a multimeric transport system and thus, additional subunits may be required for its function. May play a role in lysosomal ion flux and osmoregulation. This is Solute carrier family 12 member 9 (slc12a9) from Danio rerio (Zebrafish).